The chain runs to 230 residues: Probable tetraspanin tspD (230 aa).

Residues 1–20 are Cytoplasmic-facing; that stretch reads MVEYLPSTPRYLKVPLIILN. The helical transmembrane segment at 21–41 threads the bilayer; the sequence is VILWLLGLVLVIIGGICVGFF. At 42 to 65 the chain is on the extracellular side; the sequence is SRFKELQEVGGVSESIKSISVSLP. A helical transmembrane segment spans residues 66–86; that stretch reads AGVLSIGIFFMVLTVAGCIVA. Residues 87 to 90 lie on the Cytoplasmic side of the membrane; sequence YKEK. Residues 91–111 traverse the membrane as a helical segment; sequence MVGLVFYTILMLVLLVVLIGI. Residues 112–200 lie on the Extracellular side of the membrane; it reads GGEALTYHNA…VNSKLYLVGS (89 aa). N-linked (GlcNAc...) asparagine glycans are attached at residues N133, N138, N163, and N179. Residues 201–221 form a helical membrane-spanning segment; it reads AGVAIGVIELVSLMFALFLIV. The Cytoplasmic segment spans residues 222–230; that stretch reads RLYKSNSYR.

This sequence belongs to the tetraspanin (TM4SF) family.

It localises to the membrane. The sequence is that of Probable tetraspanin tspD (tspD) from Dictyostelium discoideum (Social amoeba).